Reading from the N-terminus, the 201-residue chain is Histidine biosynthesis bifunctional protein HisIE (201 aa).

A phosphoribosyl-AMP cyclohydrolase region spans residues 1 to 111 (MKINWQKVDN…EKTTQPDWIF (111 aa)). The phosphoribosyl-ATP pyrophosphohydrolase stretch occupies residues 112 to 201 (LSKLERLIAS…IHKLKERHTK (90 aa)).

In the N-terminal section; belongs to the PRA-CH family. The protein in the C-terminal section; belongs to the PRA-PH family.

It is found in the cytoplasm. It catalyses the reaction 1-(5-phospho-beta-D-ribosyl)-ATP + H2O = 1-(5-phospho-beta-D-ribosyl)-5'-AMP + diphosphate + H(+). The catalysed reaction is 1-(5-phospho-beta-D-ribosyl)-5'-AMP + H2O = 1-(5-phospho-beta-D-ribosyl)-5-[(5-phospho-beta-D-ribosylamino)methylideneamino]imidazole-4-carboxamide. It functions in the pathway amino-acid biosynthesis; L-histidine biosynthesis; L-histidine from 5-phospho-alpha-D-ribose 1-diphosphate: step 2/9. The protein operates within amino-acid biosynthesis; L-histidine biosynthesis; L-histidine from 5-phospho-alpha-D-ribose 1-diphosphate: step 3/9. In Pasteurella multocida (strain Pm70), this protein is Histidine biosynthesis bifunctional protein HisIE (hisI).